Consider the following 259-residue polypeptide: 4-hydroxy-tetrahydrodipicolinate reductase (259 aa).

Residues 9-14 (GAGGRM) and Glu-35 each bind NAD(+). Arg-36 provides a ligand contact to NADP(+). NAD(+) contacts are provided by residues 92–94 (GTT) and 116–119 (APNM). Catalysis depends on His-149, which acts as the Proton donor/acceptor. Residue His-150 participates in (S)-2,3,4,5-tetrahydrodipicolinate binding. The Proton donor role is filled by Lys-153. 159–160 (GT) serves as a coordination point for (S)-2,3,4,5-tetrahydrodipicolinate.

This sequence belongs to the DapB family.

It localises to the cytoplasm. The enzyme catalyses (S)-2,3,4,5-tetrahydrodipicolinate + NAD(+) + H2O = (2S,4S)-4-hydroxy-2,3,4,5-tetrahydrodipicolinate + NADH + H(+). The catalysed reaction is (S)-2,3,4,5-tetrahydrodipicolinate + NADP(+) + H2O = (2S,4S)-4-hydroxy-2,3,4,5-tetrahydrodipicolinate + NADPH + H(+). It participates in amino-acid biosynthesis; L-lysine biosynthesis via DAP pathway; (S)-tetrahydrodipicolinate from L-aspartate: step 4/4. Catalyzes the conversion of 4-hydroxy-tetrahydrodipicolinate (HTPA) to tetrahydrodipicolinate. This chain is 4-hydroxy-tetrahydrodipicolinate reductase, found in Nitratidesulfovibrio vulgaris (strain DSM 19637 / Miyazaki F) (Desulfovibrio vulgaris).